A 91-amino-acid chain; its full sequence is MSSFLTPAVYSKNGLENQWINTIWNTHDLMCGCNNAIKHLFDILKKKGEQLCLPSTTEDAGTQTHGEEKDYDLEEGDLDALFANDFEEDDG.

This is an uncharacterized protein from Homo sapiens (Human).